Consider the following 339-residue polypeptide: 4-hydroxy-2-oxovalerate aldolase (339 aa).

The 251-residue stretch at 7-257 (IRIMDTTLRD…QVGVDLYKIM (251 aa)) folds into the Pyruvate carboxyltransferase domain. Position 15–16 (15–16 (RD)) interacts with substrate. Asp-16 provides a ligand contact to Mn(2+). The Proton acceptor role is filled by His-19. Positions 169 and 196 each coordinate substrate. The Mn(2+) site is built by His-196 and His-198. Tyr-286 serves as a coordination point for substrate.

The protein belongs to the 4-hydroxy-2-oxovalerate aldolase family.

The enzyme catalyses (S)-4-hydroxy-2-oxopentanoate = acetaldehyde + pyruvate. The protein is 4-hydroxy-2-oxovalerate aldolase of Pelotomaculum thermopropionicum (strain DSM 13744 / JCM 10971 / SI).